The sequence spans 531 residues: Polyamine aminopropyltransferase 1 (531 aa).

The next 7 helical transmembrane spans lie at 27-47 (FLLL…ELAL), 59-79 (VLQT…GSLA), 96-116 (GVLA…FAWL), 122-142 (AMIV…PLLM), 160-180 (MFAV…LFLL), 188-208 (GALV…VFIF), and 218-238 (AGLL…YVLA). Positions 205-476 (VFIFRRQTGR…VLARPGTEAP (272 aa)) are spermidine synthase. The 239-residue stretch at 233–471 (TTYVLADDLE…GNWGFVLARP (239 aa)) folds into the PABS domain. Residue Q263 participates in S-methyl-5'-thioadenosine binding. Residues H298 and D320 each coordinate spermidine. S-methyl-5'-thioadenosine-binding positions include E340 and 374-375 (DA). Residue D392 is the Proton acceptor of the active site.

The protein belongs to the spermidine/spermine synthase family. In terms of assembly, homodimer or homotetramer.

The protein resides in the cell membrane. The enzyme catalyses S-adenosyl 3-(methylsulfanyl)propylamine + putrescine = S-methyl-5'-thioadenosine + spermidine + H(+). The protein operates within amine and polyamine biosynthesis; spermidine biosynthesis; spermidine from putrescine: step 1/1. Catalyzes the irreversible transfer of a propylamine group from the amino donor S-adenosylmethioninamine (decarboxy-AdoMet) to putrescine (1,4-diaminobutane) to yield spermidine. This Streptomyces coelicolor (strain ATCC BAA-471 / A3(2) / M145) protein is Polyamine aminopropyltransferase 1.